Reading from the N-terminus, the 189-residue chain is Inosine triphosphate pyrophosphatase (189 aa).

Residue 14 to 19 (TGNQNK) participates in ITP binding. E42 serves as a coordination point for Mg(2+). ITP-binding positions include K54, 70-71 (DT), K87, 146-149 (FGWD), K167, and 172-173 (HR).

Belongs to the HAM1 NTPase family. As to quaternary structure, homodimer. It depends on Mg(2+) as a cofactor. Mn(2+) serves as cofactor.

Its subcellular location is the cytoplasm. The protein resides in the nucleus. The enzyme catalyses ITP + H2O = IMP + diphosphate + H(+). It catalyses the reaction dITP + H2O = dIMP + diphosphate + H(+). The catalysed reaction is XTP + H2O = XMP + diphosphate + H(+). In terms of biological role, pyrophosphatase that hydrolyzes non-canonical purine nucleotides such as inosine triphosphate (ITP), deoxyinosine triphosphate (dITP) or xanthosine 5'-triphosphate (XTP) to their respective monophosphate derivatives. The enzyme does not distinguish between the deoxy- and ribose forms. Probably excludes non-canonical purines from RNA and DNA precursor pools, thus preventing their incorporation into RNA and DNA and avoiding chromosomal lesions. This Pyricularia oryzae (strain 70-15 / ATCC MYA-4617 / FGSC 8958) (Rice blast fungus) protein is Inosine triphosphate pyrophosphatase.